The sequence spans 1520 residues: Putative lipoprotein AcfD homolog (1520 aa).

The N-terminal stretch at 1-23 (MNKKFKYKKSLLAAILSATLLAG) is a signal peptide. Disordered regions lie at residues 22 to 107 (AGCD…GATC) and 226 to 247 (NAAT…TTPG). A lipid anchor (N-palmitoyl cysteine) is attached at Cys-24. Cys-24 carries the S-diacylglycerol cysteine lipid modification. The segment covering 31 to 42 (SSSDTPPVDSGT) has biased composition (low complexity). Pro residues predominate over residues 51-77 (DPTPNPEPTPEPTPDPEPTPEPIPDPE). Residues 97–107 (GGSQRVTGATC) show a composition bias toward polar residues. Positions 234–247 (STHTSPVVPVTTPG) are enriched in low complexity. Residues 1081 to 1381 (GNMQSTGLWA…MYAQLKEWAE (301 aa)) enclose the Peptidase M60 domain. Positions 1498 to 1520 (DLPKPEQGPETINQVTEHKMSAE) are disordered.

It to V.cholerae AcfD (VC_0845).

The protein resides in the cell inner membrane. Involved in a type II secretion system (T2SS, formerly general secretion pathway, GSP) for the export of folded proteins across the outer membrane. In Escherichia coli (strain K12), this protein is Putative lipoprotein AcfD homolog (yghJ).